A 266-amino-acid polypeptide reads, in one-letter code: HTH-type transcriptional regulator MurR (266 aa).

The HTH rpiR-type domain maps to 1-77 (MLYLTKIRNA…MALIGEYSAS (77 aa)). Positions 37 to 56 (SRQMAKQLGISQSSIVKFAQ) form a DNA-binding region, H-T-H motif. The 139-residue stretch at 128–266 (IIEVISKAPF…LLFVGLVQHQ (139 aa)) folds into the SIS domain.

In terms of assembly, homotetramer.

It participates in amino-sugar metabolism; N-acetylmuramate degradation [regulation]. Functionally, represses the expression of the murPQ operon involved in the uptake and degradation of N-acetylmuramic acid (MurNAc). Binds to two adjacent inverted repeats within the operator region. MurNAc 6-phosphate, the substrate of MurQ, is the specific inducer that weakens binding of MurR to the operator. This chain is HTH-type transcriptional regulator MurR, found in Shigella flexneri serotype 5b (strain 8401).